A 264-amino-acid polypeptide reads, in one-letter code: Virulence plasmid protein pGP3-D (264 aa).

The sequence is that of Virulence plasmid protein pGP3-D from Chlamydia psittaci (Chlamydophila psittaci).